The sequence spans 757 residues: RNA exonuclease 3 (757 aa).

Disordered stretches follow at residues 56–259 and 474–590; these read VKRE…AEHL and ESLD…CDQA. Residues 120 to 132 are compositionally biased toward basic and acidic residues; the sequence is EGGRAEGAEKKEF. 3 stretches are compositionally biased toward polar residues: residues 145–172, 202–223, and 230–240; these read TPHA…SSVS, QPSS…SSPK, and MTTSASPSQSR. Composition is skewed to low complexity over residues 244–253 and 474–502; these read RNTSASPSSS and ESLD…KTAS. The segment covering 503-516 has biased composition (polar residues); sequence RPASTPTKSLTSSL. Composition is skewed to basic and acidic residues over residues 543–557 and 565–581; these read REPD…RGIG and SQER…RVRE. One can recognise an Exonuclease domain in the interval 597–751; it reads VVAVDCEMLY…EDALAALDVV (155 aa).

The protein belongs to the REXO1/REXO3 family.

It is found in the cytoplasm. The protein localises to the nucleus. 3' to 5' exoribonuclease required for proper 3' end maturation of MRP RNA and of the U5L snRNA. The chain is RNA exonuclease 3 (REX3) from Yarrowia lipolytica (strain CLIB 122 / E 150) (Yeast).